Consider the following 141-residue polypeptide: MAIILGADAHGNELKEVLKSFLQQEGFDVTDVTDIDKDFIDNTLAVAQAVNDKDTNLGIMVDAYGAGPFMVATKLKGMIAAEVSDERSAYMTRGHNNARMITLGARIVGEELAKNIAKAFVVGSYDGGRHQIRVDMLNKMA.

The protein belongs to the LacAB/RpiB family. Heteromultimeric protein consisting of LacA and LacB.

It carries out the reaction aldehydo-D-galactose 6-phosphate = keto-D-tagatose 6-phosphate. It functions in the pathway carbohydrate metabolism; D-galactose 6-phosphate degradation; D-tagatose 6-phosphate from D-galactose 6-phosphate: step 1/1. This is Galactose-6-phosphate isomerase subunit LacA from Streptococcus equi subsp. zooepidemicus (strain MGCS10565).